The sequence spans 591 residues: Laccase (591 aa).

The signal sequence occupies residues 1–20 (MPSFFRALFSGLIASQLSWA). Plastocyanin-like domains lie at 66–189 (VRQY…IQID) and 198–356 (IDLG…HPTN). Asparagine 121 is a glycosylation site (N-linked (GlcNAc...) asparagine). Residues histidine 126, histidine 128, histidine 171, and histidine 173 each contribute to the Cu cation site. Intrachain disulfides connect cysteine 147–cysteine 571 and cysteine 332–cysteine 366. N-linked (GlcNAc...) asparagine glycans are attached at residues asparagine 234, asparagine 242, asparagine 265, and asparagine 323. 2 N-linked (GlcNAc...) asparagine glycosylation sites follow: asparagine 407 and asparagine 425. A Plastocyanin-like 3 domain is found at 416-551 (GHPITQYVIN…AGLGNTFLEQ (136 aa)). Cu cation is bound by residues histidine 463, histidine 466, histidine 468, histidine 533, cysteine 534, histidine 535, and histidine 539.

Belongs to the multicopper oxidase family. The cofactor is Cu cation.

Its subcellular location is the secreted. It carries out the reaction 4 hydroquinone + O2 = 4 benzosemiquinone + 2 H2O. Functionally, lignin degradation and detoxification of lignin-derived products. This chain is Laccase (LAC-1), found in Cryphonectria parasitica (Chestnut blight fungus).